Reading from the N-terminus, the 147-residue chain is uncharacterized protein (147 aa).

The HTH marR-type domain maps to N11 to E147. The H-T-H motif DNA-binding region spans Q61–K84.

This is an uncharacterized protein from Bacillus subtilis (strain 168).